The primary structure comprises 173 residues: Photosystem I assembly protein Ycf3 (173 aa).

TPR repeat units lie at residues Ala-35–Ala-68, Gly-72–Gln-105, and Gly-120–Gly-153.

It belongs to the Ycf3 family.

The protein localises to the cellular thylakoid membrane. Essential for the assembly of the photosystem I (PSI) complex. May act as a chaperone-like factor to guide the assembly of the PSI subunits. This chain is Photosystem I assembly protein Ycf3, found in Synechococcus sp. (strain CC9311).